The sequence spans 400 residues: Tryptophan synthase beta chain (400 aa).

K92 is modified (N6-(pyridoxal phosphate)lysine).

Belongs to the TrpB family. In terms of assembly, tetramer of two alpha and two beta chains. Pyridoxal 5'-phosphate serves as cofactor.

The enzyme catalyses (1S,2R)-1-C-(indol-3-yl)glycerol 3-phosphate + L-serine = D-glyceraldehyde 3-phosphate + L-tryptophan + H2O. Its pathway is amino-acid biosynthesis; L-tryptophan biosynthesis; L-tryptophan from chorismate: step 5/5. Its function is as follows. The beta subunit is responsible for the synthesis of L-tryptophan from indole and L-serine. This chain is Tryptophan synthase beta chain, found in Neisseria gonorrhoeae (strain NCCP11945).